The chain runs to 87 residues: Small ribosomal subunit protein bS16 (87 aa).

Belongs to the bacterial ribosomal protein bS16 family.

The polypeptide is Small ribosomal subunit protein bS16 (Ehrlichia ruminantium (strain Gardel)).